Here is a 230-residue protein sequence, read N- to C-terminus: Protein GrpE (230 aa).

Disordered regions lie at residues 1 to 28 (MADE…EALK) and 209 to 230 (GVSK…EDNA). The span at 221 to 230 (NGASTSEDNA) shows a compositional bias: polar residues.

The protein belongs to the GrpE family. As to quaternary structure, homodimer.

It is found in the cytoplasm. In terms of biological role, participates actively in the response to hyperosmotic and heat shock by preventing the aggregation of stress-denatured proteins, in association with DnaK and GrpE. It is the nucleotide exchange factor for DnaK and may function as a thermosensor. Unfolded proteins bind initially to DnaJ; upon interaction with the DnaJ-bound protein, DnaK hydrolyzes its bound ATP, resulting in the formation of a stable complex. GrpE releases ADP from DnaK; ATP binding to DnaK triggers the release of the substrate protein, thus completing the reaction cycle. Several rounds of ATP-dependent interactions between DnaJ, DnaK and GrpE are required for fully efficient folding. This Brucella ovis (strain ATCC 25840 / 63/290 / NCTC 10512) protein is Protein GrpE.